A 490-amino-acid chain; its full sequence is 7-ethoxycoumarin O-deethylase (490 aa).

Heme is bound at residue Cys-432.

The protein belongs to the cytochrome P450 family. Heme is required as a cofactor.

In terms of biological role, capable of dealkylating a model xenobiotic compound, 7-ethoxycoumarin. Metabolizes with high efficiency a wide range of xenobiotics, including alkoxycoumarins, alkoxyresorufins, and several herbicides of the class of phenylureas. Catalyzes the double N-dealkylation (oxidative N-demethylation) of phenylureas such as chlortoluron and isoproturon with turnover rates comparable to those reported for physiological substrates and produces non-phytotoxic compounds. Could be used for control of herbicide tolerance and selectivity, as well as soil and groundwater bioremediation. This is 7-ethoxycoumarin O-deethylase (CYP76B1) from Helianthus tuberosus (Jerusalem artichoke).